Reading from the N-terminus, the 246-residue chain is Probable transcriptional regulatory protein KPK_1906 (246 aa).

This sequence belongs to the TACO1 family.

Its subcellular location is the cytoplasm. The polypeptide is Probable transcriptional regulatory protein KPK_1906 (Klebsiella pneumoniae (strain 342)).